The sequence spans 579 residues: Proteasome-associated ATPase (579 aa).

The disordered stretch occupies residues 1–21; that stretch reads MPRDETPEREHAEQQSRQALE. A coiled-coil region spans residues 8-86; the sequence is EREHAEQQSR…REEVEKLTQP (79 aa). Position 268 to 273 (268 to 273) interacts with ATP; that stretch reads GCGKTL. Residues 578-579 are docks into pockets in the proteasome alpha-ring; that stretch reads YL.

The protein belongs to the AAA ATPase family. Homohexamer. Assembles into a hexameric ring structure that caps the 20S proteasome core. Strongly interacts with the prokaryotic ubiquitin-like protein Pup through a hydrophobic interface; the interacting region of ARC lies in its N-terminal coiled-coil domain. There is one Pup binding site per ARC hexamer ring. Upon ATP-binding, the C-terminus of ARC interacts with the alpha-rings of the proteasome core, possibly by binding to the intersubunit pockets.

The protein operates within protein degradation; proteasomal Pup-dependent pathway. ATPase which is responsible for recognizing, binding, unfolding and translocation of pupylated proteins into the bacterial 20S proteasome core particle. May be essential for opening the gate of the 20S proteasome via an interaction with its C-terminus, thereby allowing substrate entry and access to the site of proteolysis. Thus, the C-termini of the proteasomal ATPase may function like a 'key in a lock' to induce gate opening and therefore regulate proteolysis. The chain is Proteasome-associated ATPase from Acidimicrobium ferrooxidans (strain DSM 10331 / JCM 15462 / NBRC 103882 / ICP).